We begin with the raw amino-acid sequence, 748 residues long: EF-hand domain-containing family member C2 (748 aa).

DM10 domains lie at 75–182 (DKQV…VKMG), 226–366 (DRQV…RSKY), and 428–535 (VSNV…EQHA). EF-hand domains follow at residues 556–591 (EQQKTVKQFFTMSDPSSTGSLPYESFRTLLADLDVE) and 631–666 (EKFSEMIQAFTHEDRDRCGQLSSKEARIICKAFRLP).

It is found in the cytoplasm. Its subcellular location is the cytoskeleton. The protein localises to the cilium axoneme. Functionally, microtubule inner protein (MIP) part of the dynein-decorated doublet microtubules (DMTs) in cilia axoneme, which is required for motile cilia beating. The polypeptide is EF-hand domain-containing family member C2 (efhc2) (Danio rerio (Zebrafish)).